The following is a 276-amino-acid chain: NH(3)-dependent NAD(+) synthetase (276 aa).

ATP is bound at residue 43–50 (GISGGVDS). Position 49 (Asp49) interacts with Mg(2+). Arg146 contacts deamido-NAD(+). Residue Thr166 coordinates ATP. Glu171 lines the Mg(2+) pocket. Deamido-NAD(+) contacts are provided by Lys179 and Asp186. Lys195 and Thr217 together coordinate ATP. Deamido-NAD(+) is bound at residue 266–267 (HK).

The protein belongs to the NAD synthetase family. In terms of assembly, homodimer.

The enzyme catalyses deamido-NAD(+) + NH4(+) + ATP = AMP + diphosphate + NAD(+) + H(+). Its pathway is cofactor biosynthesis; NAD(+) biosynthesis; NAD(+) from deamido-NAD(+) (ammonia route): step 1/1. Functionally, catalyzes the ATP-dependent amidation of deamido-NAD to form NAD. Uses ammonia as a nitrogen source. The polypeptide is NH(3)-dependent NAD(+) synthetase (Aliivibrio fischeri (strain ATCC 700601 / ES114) (Vibrio fischeri)).